We begin with the raw amino-acid sequence, 270 residues long: Shikimate dehydrogenase (NADP(+)) (270 aa).

Shikimate is bound by residues 15-17 (SLS) and threonine 62. Lysine 66 serves as the catalytic Proton acceptor. Shikimate-binding residues include asparagine 87 and aspartate 102. NADP(+)-binding positions include 126-130 (GAGGS), 149-154 (NRTVGR), and isoleucine 210. Tyrosine 212 is a binding site for shikimate. Glycine 233 contacts NADP(+).

It belongs to the shikimate dehydrogenase family. In terms of assembly, homodimer.

The enzyme catalyses shikimate + NADP(+) = 3-dehydroshikimate + NADPH + H(+). It participates in metabolic intermediate biosynthesis; chorismate biosynthesis; chorismate from D-erythrose 4-phosphate and phosphoenolpyruvate: step 4/7. Functionally, involved in the biosynthesis of the chorismate, which leads to the biosynthesis of aromatic amino acids. Catalyzes the reversible NADPH linked reduction of 3-dehydroshikimate (DHSA) to yield shikimate (SA). This Hyphomonas neptunium (strain ATCC 15444) protein is Shikimate dehydrogenase (NADP(+)).